A 122-amino-acid polypeptide reads, in one-letter code: Large ribosomal subunit protein uL14 (122 aa).

Belongs to the universal ribosomal protein uL14 family. As to quaternary structure, part of the 50S ribosomal subunit. Forms a cluster with proteins L3 and L19. In the 70S ribosome, L14 and L19 interact and together make contacts with the 16S rRNA in bridges B5 and B8.

Functionally, binds to 23S rRNA. Forms part of two intersubunit bridges in the 70S ribosome. This chain is Large ribosomal subunit protein uL14, found in Ureaplasma parvum serovar 3 (strain ATCC 27815 / 27 / NCTC 11736).